A 525-amino-acid chain; its full sequence is D-arabinono-1,4-lactone oxidase (525 aa).

In terms of domain architecture, FAD-binding PCMH-type spans Ile20–Ala195. A Pros-8alpha-FAD histidine modification is found at His58.

Belongs to the oxygen-dependent FAD-linked oxidoreductase family. FAD is required as a cofactor.

Its subcellular location is the mitochondrion membrane. The enzyme catalyses D-arabinono-1,4-lactone + O2 = dehydro-D-arabinono-1,4-lactone + H2O2 + H(+). It functions in the pathway cofactor biosynthesis; D-erythroascorbate biosynthesis; dehydro-D-arabinono-1,4-lactone from D-arabinose: step 2/2. The polypeptide is D-arabinono-1,4-lactone oxidase (ALO1) (Candida glabrata (strain ATCC 2001 / BCRC 20586 / JCM 3761 / NBRC 0622 / NRRL Y-65 / CBS 138) (Yeast)).